The sequence spans 261 residues: MGYLNNVTGYREDLLANRAIVKHGNFALLTPDGLVKNIIPGFENCDATILSTPKLGASFVDYLVTLHQNGGNQQGFGGEGIETFLYVISGNITAKAEGKTFALSEGGYLYCPPGSLMTFVNAQAEDSQIFLYKRRYVPVEGYAPWLVSGNASELERIHYEGMDDVILLDFLPKELGFDMNMHILSFAPGASHGYIETHVQEHGAYILSGQGVYNLDNNWIPVKKGDYIFMGAYSLQAGYGVGRGEAFSYIYSKDCNRDVEI.

The 47-residue stretch at 184–230 (LSFAPGASHGYIETHVQEHGAYILSGQGVYNLDNNWIPVKKGDYIFM) folds into the Cupin type-2 domain. 4 residues coordinate Mn(2+): Glu-196, His-198, His-202, and Gln-236. Glu-196 lines the substrate pocket. Residues Gln-236, Tyr-249, and Lys-253 each coordinate substrate.

The protein belongs to the UGHY family. Monomer. It depends on Mn(2+) as a cofactor.

It localises to the cytoplasm. It carries out the reaction (S)-2-ureidoglycine + H2O = (S)-ureidoglycolate + NH4(+). In terms of biological role, involved in the anaerobic nitrogen utilization via the assimilation of allantoin. Catalyzes the second stereospecific hydrolysis reaction (deamination) of the allantoin degradation pathway, producing S-ureidoglycolate and ammonia from S-ureidoglycine. This Escherichia coli (strain K12) protein is (S)-ureidoglycine aminohydrolase (allE).